A 25-amino-acid polypeptide reads, in one-letter code: Grammistin Pp 3 (25 aa).

It belongs to the grammistin family. Group 3 subfamily. Exists as aggregates of 3-4 molecules. Expressed by the skin glands.

The protein resides in the secreted. In terms of biological role, thanks to its abundant amphiphilic alpha-helices, it may integrate into membrane phospholipids, leading to lysis of the membrane. Has hemolytic activity. Has antibacterial activity with a broad spectrum against various species of bacteria including both Gram-positive and Gram-negative groups. Also has ichthyotoxic activity. This chain is Grammistin Pp 3, found in Pogonoperca punctata (Clown grouper).